Here is a 128-residue protein sequence, read N- to C-terminus: UPF0102 protein Mext_0406 (128 aa).

The protein belongs to the UPF0102 family.

This Methylorubrum extorquens (strain PA1) (Methylobacterium extorquens) protein is UPF0102 protein Mext_0406.